Consider the following 430-residue polypeptide: Rosmarinate synthase (430 aa).

Residue histidine 152 is the Proton acceptor of the active site. The tract at residues 178 to 210 is disordered; it reads TPLPHFDRSSLSARNPPQPQFSHAEYQPPPTLE. Residue aspartate 377 is the Proton acceptor of the active site.

Belongs to the plant acyltransferase family.

It carries out the reaction (2R)-3-(3,4-dihydroxyphenyl)lactate + (E)-caffeoyl-CoA = (R)-rosmarinate + CoA. Involved in the biosynthesis of rosmarinic acid, a compound with antiviral, antimicrobial and anti-inflammatory activities. Can use 4-coumaroyl- and caffeoyl-CoA as hydroxycinnamoyl donors and 4-Hydroxyphenyllactate and 3.4-Dihydroxyphenyllactate, but not shikimate or quinate, as hydroxycinnamoyl acceptors. Can also putatively catalyze amide formation with D-amino acids as acceptors. This chain is Rosmarinate synthase (RAS), found in Plectranthus scutellarioides (Coleus).